The primary structure comprises 222 residues: Methylthioribulose-1-phosphate dehydratase (222 aa).

The Zn(2+) site is built by histidine 94 and histidine 96.

This sequence belongs to the aldolase class II family. MtnB subfamily. Requires Zn(2+) as cofactor.

The enzyme catalyses 5-(methylsulfanyl)-D-ribulose 1-phosphate = 5-methylsulfanyl-2,3-dioxopentyl phosphate + H2O. It functions in the pathway amino-acid biosynthesis; L-methionine biosynthesis via salvage pathway; L-methionine from S-methyl-5-thio-alpha-D-ribose 1-phosphate: step 2/6. Functionally, catalyzes the dehydration of methylthioribulose-1-phosphate (MTRu-1-P) into 2,3-diketo-5-methylthiopentyl-1-phosphate (DK-MTP-1-P). The polypeptide is Methylthioribulose-1-phosphate dehydratase (Yersinia pseudotuberculosis serotype O:1b (strain IP 31758)).